The chain runs to 393 residues: Rhizopuspepsin (393 aa).

The signal sequence occupies residues 1–21; the sequence is MKFTLISSCIAIAALAVAVDA. Residues 22–68 constitute a propeptide, activation peptide; sequence APGEKKISIPLAKNPNYKPSAKNAIQKAIAKYNKHKINTSTGGIVPD. Residues 85-389 form the Peptidase A1 domain; the sequence is YYGQVTIGTP…NQGVPEVQIA (305 aa). D103 is an active-site residue. An intrachain disulfide couples C116 to C119. Residue D286 is part of the active site. The cysteines at positions 320 and 353 are disulfide-linked.

It belongs to the peptidase A1 family.

The enzyme catalyses Hydrolysis of proteins with broad specificity similar to that of pepsin A, preferring hydrophobic residues at P1 and P1'. Clots milk and activates trypsinogen. Does not cleave 4-Gln-|-His-5, but does cleave 10-His-|-Leu-11 and 12-Val-|-Glu-13 in B chain of insulin.. The protein is Rhizopuspepsin of Rhizopus chinensis (Bread mold).